The primary structure comprises 122 residues: Small ribosomal subunit protein uS13 (122 aa).

The segment covering 98-116 (VRGQKTKTNARTRKGRRKT) has biased composition (basic residues). A disordered region spans residues 98 to 122 (VRGQKTKTNARTRKGRRKTVGAATK).

The protein belongs to the universal ribosomal protein uS13 family. As to quaternary structure, part of the 30S ribosomal subunit. Forms a loose heterodimer with protein S19. Forms two bridges to the 50S subunit in the 70S ribosome.

Functionally, located at the top of the head of the 30S subunit, it contacts several helices of the 16S rRNA. In the 70S ribosome it contacts the 23S rRNA (bridge B1a) and protein L5 of the 50S subunit (bridge B1b), connecting the 2 subunits; these bridges are implicated in subunit movement. Contacts the tRNAs in the A and P-sites. The protein is Small ribosomal subunit protein uS13 of Campylobacter fetus subsp. fetus (strain 82-40).